We begin with the raw amino-acid sequence, 435 residues long: Trigger factor (435 aa).

The 86-residue stretch at 163-248 (GDFVTFDFKG…VKEIKVKELP (86 aa)) folds into the PPIase FKBP-type domain.

Belongs to the FKBP-type PPIase family. Tig subfamily.

It is found in the cytoplasm. The enzyme catalyses [protein]-peptidylproline (omega=180) = [protein]-peptidylproline (omega=0). Involved in protein export. Acts as a chaperone by maintaining the newly synthesized protein in an open conformation. Functions as a peptidyl-prolyl cis-trans isomerase. In Geobacter sp. (strain M21), this protein is Trigger factor.